Consider the following 283-residue polypeptide: Thymidylate synthase (283 aa).

Arg-22 serves as a coordination point for dUMP. Cys-160 functions as the Nucleophile in the catalytic mechanism. DUMP is bound by residues 180-183, Asn-191, and 221-223; these read RSCD and HIY. Asp-183 contributes to the (6R)-5,10-methylene-5,6,7,8-tetrahydrofolate binding site. Ser-282 is a binding site for (6R)-5,10-methylene-5,6,7,8-tetrahydrofolate.

It belongs to the thymidylate synthase family. Bacterial-type ThyA subfamily. In terms of assembly, homodimer.

It is found in the cytoplasm. It carries out the reaction dUMP + (6R)-5,10-methylene-5,6,7,8-tetrahydrofolate = 7,8-dihydrofolate + dTMP. The protein operates within pyrimidine metabolism; dTTP biosynthesis. Its function is as follows. Catalyzes the reductive methylation of 2'-deoxyuridine-5'-monophosphate (dUMP) to 2'-deoxythymidine-5'-monophosphate (dTMP) while utilizing 5,10-methylenetetrahydrofolate (mTHF) as the methyl donor and reductant in the reaction, yielding dihydrofolate (DHF) as a by-product. This enzymatic reaction provides an intracellular de novo source of dTMP, an essential precursor for DNA biosynthesis. The chain is Thymidylate synthase from Histophilus somni (strain 129Pt) (Haemophilus somnus).